Reading from the N-terminus, the 453-residue chain is Serine incorporator 1 (453 aa).

The N-myristoyl glycine moiety is linked to residue glycine 2. Topologically, residues 2–39 (GSVLGLCSVASWIPCLCGSAPCLLCRCCPSGNNSTVTR) are cytoplasmic. A helical membrane pass occupies residues 40–60 (LIYALFLLVGVCVACVMLIPG). At 61–88 (MEEQLNKIPGFCENEKGVVPCNILVGYK) the chain is on the lumenal side. Residues 89 to 109 (AVYRLCFGLAMFYLLLSLLMI) form a helical membrane-spanning segment. Residues 110 to 123 (KVKSSSDPRAAVHN) lie on the Cytoplasmic side of the membrane. The helical transmembrane segment at 124 to 144 (GFWFFKFATAVAIIIGAFFIP) threads the bilayer. Topologically, residues 145-151 (EGTFTTV) are lumenal. Residues 152-172 (WFYVGMAGAFCFILIQLVLLI) traverse the membrane as a helical segment. Topologically, residues 173 to 197 (DFAHSWNESWVEKMEEGNSRCWYAA) are cytoplasmic. The helical transmembrane segment at 198-218 (LLSATALNYLLSLVAVVLFFV) threads the bilayer. Topologically, residues 219-231 (YYTHPASCAENKA) are lumenal. A helical membrane pass occupies residues 232 to 252 (FISVNMLLCIGASVMSILPKI). Residues 253–259 (QESQPRS) are Cytoplasmic-facing. Residues 260–280 (GLLQSSVITVYTMYLTWSAMT) form a helical membrane-spanning segment. At 281–309 (NEPETNCNPSLLSIIGFNTTRPIPKDGQS) the chain is on the lumenal side. The chain crosses the membrane as a helical span at residues 310–330 (VQWWHPQGIIGLVLFLLCVFY). The Cytoplasmic portion of the chain corresponds to 331–387 (SSIRTSNNSQVNKLTLTSDESTLIEDGNGRSDGSLDDGDGIHRAVDNERDGVTYSYS). Residue serine 351 is modified to Phosphoserine. The residue at position 352 (threonine 352) is a Phosphothreonine. A phosphoserine mark is found at serine 361 and serine 364. The chain crosses the membrane as a helical span at residues 388 to 408 (FFHFMLFLASLYIMMTLTNWY). Residues 409-426 (RYEPSREMKSQWTAVWVK) are Lumenal-facing. The chain crosses the membrane as a helical span at residues 427-447 (ISSSWIGLVLYVWTLVAPLVL). Topologically, residues 448–453 (TNRDFD) are cytoplasmic.

This sequence belongs to the TDE1 family. As to quaternary structure, interacts with SPTLC1. As to expression, highly expressed in the neuronal populations such as Purkinje cells in the cerebellum, brainstem and spinal motor neurons, locus coeruleus and raphe nuclei.

Its subcellular location is the endoplasmic reticulum membrane. Its function is as follows. Enhances the incorporation of serine into phosphatidylserine and sphingolipids. This chain is Serine incorporator 1 (Serinc1), found in Mus musculus (Mouse).